Here is a 189-residue protein sequence, read N- to C-terminus: Probable nicotinate-nucleotide adenylyltransferase (189 aa).

This sequence belongs to the NadD family.

It carries out the reaction nicotinate beta-D-ribonucleotide + ATP + H(+) = deamido-NAD(+) + diphosphate. The protein operates within cofactor biosynthesis; NAD(+) biosynthesis; deamido-NAD(+) from nicotinate D-ribonucleotide: step 1/1. Functionally, catalyzes the reversible adenylation of nicotinate mononucleotide (NaMN) to nicotinic acid adenine dinucleotide (NaAD). The chain is Probable nicotinate-nucleotide adenylyltransferase from Staphylococcus aureus (strain N315).